Here is a 201-residue protein sequence, read N- to C-terminus: Recombination protein RecR (201 aa).

The C4-type zinc-finger motif lies at cysteine 57–cysteine 72. In terms of domain architecture, Toprim spans glycine 81 to proline 176.

Belongs to the RecR family.

Its function is as follows. May play a role in DNA repair. It seems to be involved in an RecBC-independent recombinational process of DNA repair. It may act with RecF and RecO. In Klebsiella pneumoniae subsp. pneumoniae (strain ATCC 700721 / MGH 78578), this protein is Recombination protein RecR.